Here is a 701-residue protein sequence, read N- to C-terminus: Pre-mRNA-splicing factor CLF1 (701 aa).

12 HAT repeats span residues 43 to 75, 78 to 110, 112 to 144, 146 to 177, 179 to 210, 214 to 253, 266 to 299, 309 to 341, 343 to 378, 388 to 424, 545 to 576, and 601 to 642; these read SYQQ…WEIE, HDFP…LELS, KNIN…TEEM, KNYP…FEAR, EEKE…YEME, DDVN…SWTS, EIFK…FEKN, SVLI…LLQN, SNKS…FWIW, NNPV…FELR, MQYD…FESS, and SQIE…VNGS.

The protein belongs to the crooked-neck family. As to quaternary structure, associated with the spliceosome.

The protein resides in the nucleus. Involved in pre-mRNA splicing and cell cycle progression. Required for the spliceosome assembly and initiation of the DNA replication. This chain is Pre-mRNA-splicing factor CLF1 (CLF1), found in Candida albicans (strain SC5314 / ATCC MYA-2876) (Yeast).